A 335-amino-acid chain; its full sequence is Dihydroorotate dehydrogenase (quinone) (335 aa).

FMN contacts are provided by residues 58 to 62 and T82; that span reads AGADK. K62 is a substrate binding site. Position 107 to 111 (107 to 111) interacts with substrate; it reads NRNGF. N135 and N168 together coordinate FMN. N168 provides a ligand contact to substrate. The active-site Nucleophile is the S171. Position 173 (N173) interacts with substrate. The FMN site is built by K213 and G241. 242 to 243 lines the substrate pocket; sequence NT. Residues G264, G293, and 314–315 each bind FMN; that span reads YS.

This sequence belongs to the dihydroorotate dehydrogenase family. Type 2 subfamily. Monomer. Requires FMN as cofactor.

It localises to the cell membrane. It catalyses the reaction (S)-dihydroorotate + a quinone = orotate + a quinol. It participates in pyrimidine metabolism; UMP biosynthesis via de novo pathway; orotate from (S)-dihydroorotate (quinone route): step 1/1. Functionally, catalyzes the conversion of dihydroorotate to orotate with quinone as electron acceptor. The sequence is that of Dihydroorotate dehydrogenase (quinone) from Actinobacillus pleuropneumoniae serotype 5b (strain L20).